A 154-amino-acid chain; its full sequence is ATP synthase subunit b', chloroplastic (154 aa).

The helical transmembrane segment at 22–42 (GTLPLIAIQFLILMFLLNILL) threads the bilayer.

Belongs to the ATPase B chain family. In terms of assembly, F-type ATPases have 2 components, F(1) - the catalytic core - and F(0) - the membrane proton channel. F(1) has five subunits: alpha(3), beta(3), gamma(1), delta(1), epsilon(1). F(0) has four main subunits: a(1), b(1), b'(1) and c(10-14). The alpha and beta chains form an alternating ring which encloses part of the gamma chain. F(1) is attached to F(0) by a central stalk formed by the gamma and epsilon chains, while a peripheral stalk is formed by the delta, b and b' chains.

It localises to the plastid. Its subcellular location is the chloroplast thylakoid membrane. F(1)F(0) ATP synthase produces ATP from ADP in the presence of a proton or sodium gradient. F-type ATPases consist of two structural domains, F(1) containing the extramembraneous catalytic core and F(0) containing the membrane proton channel, linked together by a central stalk and a peripheral stalk. During catalysis, ATP synthesis in the catalytic domain of F(1) is coupled via a rotary mechanism of the central stalk subunits to proton translocation. In terms of biological role, component of the F(0) channel, it forms part of the peripheral stalk, linking F(1) to F(0). The b'-subunit is a diverged and duplicated form of b found in plants and photosynthetic bacteria. In Vaucheria litorea (Yellow-green alga), this protein is ATP synthase subunit b', chloroplastic.